The following is a 93-amino-acid chain: Small ribosomal subunit protein bS18 (93 aa).

The protein belongs to the bacterial ribosomal protein bS18 family. As to quaternary structure, part of the 30S ribosomal subunit. Forms a tight heterodimer with protein bS6.

In terms of biological role, binds as a heterodimer with protein bS6 to the central domain of the 16S rRNA, where it helps stabilize the platform of the 30S subunit. In Delftia acidovorans (strain DSM 14801 / SPH-1), this protein is Small ribosomal subunit protein bS18.